The sequence spans 787 residues: Ribonucleoside-diphosphate reductase large subunit (787 aa).

Substrate contacts are provided by residues T209, 224–225 (SC), G255, 436–440 (NLCTE), and 618–622 (PTVSS). Residues C225 and C453 are joined by a disulfide bond. N436 serves as the catalytic Proton acceptor. The Cysteine radical intermediate role is filled by C438. Catalysis depends on E440, which acts as the Proton acceptor.

This sequence belongs to the ribonucleoside diphosphate reductase large chain family. Heterotetramer composed of a homodimer of the large subunit (R1) and a homodimer of the small subunit (R2). Larger multisubunit protein complex are also active, composed of (R1)n(R2)n.

The catalysed reaction is a 2'-deoxyribonucleoside 5'-diphosphate + [thioredoxin]-disulfide + H2O = a ribonucleoside 5'-diphosphate + [thioredoxin]-dithiol. Functionally, ribonucleoside-diphosphate reductase holoenzyme provides the precursors necessary for viral DNA synthesis. Allows virus growth in non-dividing cells, as well as reactivation from latency in infected hosts. Catalyzes the biosynthesis of deoxyribonucleotides from the corresponding ribonucleotides. This Bos taurus (Bovine) protein is Ribonucleoside-diphosphate reductase large subunit.